The chain runs to 162 residues: NADH-quinone oxidoreductase subunit I (162 aa).

2 4Fe-4S ferredoxin-type domains span residues 52–82 and 93–122; these read LRRY…IEAG and VRYD…EGPN. [4Fe-4S] cluster contacts are provided by C62, C65, C68, C72, C102, C105, C108, and C112.

The protein belongs to the complex I 23 kDa subunit family. NDH-1 is composed of 14 different subunits. Subunits NuoA, H, J, K, L, M, N constitute the membrane sector of the complex. It depends on [4Fe-4S] cluster as a cofactor.

It is found in the cell inner membrane. The catalysed reaction is a quinone + NADH + 5 H(+)(in) = a quinol + NAD(+) + 4 H(+)(out). Functionally, NDH-1 shuttles electrons from NADH, via FMN and iron-sulfur (Fe-S) centers, to quinones in the respiratory chain. The immediate electron acceptor for the enzyme in this species is believed to be ubiquinone. Couples the redox reaction to proton translocation (for every two electrons transferred, four hydrogen ions are translocated across the cytoplasmic membrane), and thus conserves the redox energy in a proton gradient. The chain is NADH-quinone oxidoreductase subunit I from Afipia carboxidovorans (strain ATCC 49405 / DSM 1227 / KCTC 32145 / OM5) (Oligotropha carboxidovorans).